The primary structure comprises 258 residues: Alcohol dehydrogenase 2 (258 aa).

An NAD(+)-binding site is contributed by 9–33; sequence IFVGGLGFIGYEACKQLMAKNMASF. Residue S137 coordinates substrate. The active-site Proton acceptor is Y150.

The protein belongs to the short-chain dehydrogenases/reductases (SDR) family. As to quaternary structure, homodimer.

It carries out the reaction a primary alcohol + NAD(+) = an aldehyde + NADH + H(+). The catalysed reaction is a secondary alcohol + NAD(+) = a ketone + NADH + H(+). In Ceratitis cosyra (Mango fruit fly), this protein is Alcohol dehydrogenase 2 (ADH2).